The chain runs to 488 residues: MDLDQISETLSSVAEEEPLTMFLLDKLYAIREKIKQVPFSIVRLCHVYCMLIKYNASNNNCILGRKLIEEMQQFLCGTRVDGSEDISMDLSELCKLYDYCPLLCSALCRAPCVSVNKLFKIVERETRGQSENPLWHALRKYTVTATKLYDIYTTRCFLEYKGQQFFGEAVIYGAKHERVIRHLVATFYVKREVKETLGLLLDPSSGVFGASLDACFGISFNEDGFLMVKEKALIFEIKFKYKYLRDKEDHFVSELLKNPTEKSFSDFILSHPVPVIEFRERGKIPSSREYLMTYDFQYRPQRKLRTCPTPAILAPHIKQLLCLNETQKSTVIVFDCKSDLCEQKLSVFQKAVFTVNVFVNPKHRYFFQSLLQQYVMTQFYINDHNNPEYIESTEVPSVHIVTAFFRRRTEEERSLHLVIDETEYIEEEIPLALIVTPVAPNPEFTCCVITDICNLWENNICKQTSLQVWAQSAVNQYLAACVRKPKTP.

This sequence belongs to the herpesviridae alkaline nuclease family. As to quaternary structure, interacts with major DNA-binding protein; this interaction increases the nuclease processivity of the alkaline exonuclease.

Its subcellular location is the host nucleus. The protein resides in the host cytoplasm. Functionally, plays a role in processing non linear or branched viral DNA intermediates in order to promote the production of mature packaged unit-length linear progeny viral DNA molecules. Exhibits endonuclease and exonuclease activities and accepts both double-stranded and single-stranded DNA as substrate. Exonuclease digestion of DNA is in the 5'-&gt; 3' direction and the products are 5'-monophosphate nucleosides. Additionally, forms a recombinase with the major DNA-binding protein, which displays strand exchange activity. The sequence is that of Alkaline nuclease (U70) from Homo sapiens (Human).